The chain runs to 258 residues: Caffeoyl-CoA O-methyltransferase 1 (258 aa).

Residues Met-1 to Ala-16 are compositionally biased toward low complexity. Positions Met-1 to His-31 are disordered. Basic and acidic residues predominate over residues Gln-22–His-31. Residue Lys-32 coordinates substrate. Residues Thr-74, Glu-96, Gly-98–Val-99, Ser-104, Asp-122, and Ala-151 each bind S-adenosyl-L-methionine. Asp-174 serves as a coordination point for substrate. Residue Asp-174 coordinates a divalent metal cation. An S-adenosyl-L-methionine-binding site is contributed by Asp-176. 2 residues coordinate a divalent metal cation: Asp-200 and Asn-201. Asn-205 is a binding site for substrate.

Belongs to the class I-like SAM-binding methyltransferase superfamily. Cation-dependent O-methyltransferase family. CCoAMT subfamily. Requires a divalent metal cation as cofactor.

It carries out the reaction (E)-caffeoyl-CoA + S-adenosyl-L-methionine = (E)-feruloyl-CoA + S-adenosyl-L-homocysteine + H(+). It participates in aromatic compound metabolism; phenylpropanoid biosynthesis. Its function is as follows. Methylates caffeoyl-CoA to feruloyl-CoA and 5-hydroxyferuloyl-CoA to sinapoyl-CoA. Plays a role in the synthesis of feruloylated polysaccharides. Involved in the reinforcement of the plant cell wall. Also involved in the responding to wounding or pathogen challenge by the increased formation of cell wall-bound ferulic acid polymers. This Zea mays (Maize) protein is Caffeoyl-CoA O-methyltransferase 1 (CCOAOMT1).